A 418-amino-acid chain; its full sequence is D-inositol 3-phosphate glycosyltransferase 1 (418 aa).

UDP-N-acetyl-alpha-D-glucosamine-binding positions include 24-25 and Gly-32; that span reads QP. Residues 29–34, Lys-87, His-115, Ser-139, and Gln-159 each bind 1D-myo-inositol 3-phosphate; that span reads DAGGLN. Residues Arg-233 and Lys-238 each contribute to the UDP-N-acetyl-alpha-D-glucosamine site. Positions 308, 309, and 311 each coordinate Mg(2+). The UDP-N-acetyl-alpha-D-glucosamine site is built by Glu-321 and Glu-329. Thr-335 contacts Mg(2+).

This sequence belongs to the glycosyltransferase group 1 family. MshA subfamily. In terms of assembly, homodimer.

It carries out the reaction 1D-myo-inositol 3-phosphate + UDP-N-acetyl-alpha-D-glucosamine = 1D-myo-inositol 2-acetamido-2-deoxy-alpha-D-glucopyranoside 3-phosphate + UDP + H(+). Functionally, catalyzes the transfer of a N-acetyl-glucosamine moiety to 1D-myo-inositol 3-phosphate to produce 1D-myo-inositol 2-acetamido-2-deoxy-glucopyranoside 3-phosphate in the mycothiol biosynthesis pathway. This Catenulispora acidiphila (strain DSM 44928 / JCM 14897 / NBRC 102108 / NRRL B-24433 / ID139908) protein is D-inositol 3-phosphate glycosyltransferase 1.